The following is a 319-amino-acid chain: Methionyl-tRNA formyltransferase (319 aa).

Serine 114–proline 117 is a binding site for (6S)-5,6,7,8-tetrahydrofolate.

The protein belongs to the Fmt family.

The enzyme catalyses L-methionyl-tRNA(fMet) + (6R)-10-formyltetrahydrofolate = N-formyl-L-methionyl-tRNA(fMet) + (6S)-5,6,7,8-tetrahydrofolate + H(+). Functionally, attaches a formyl group to the free amino group of methionyl-tRNA(fMet). The formyl group appears to play a dual role in the initiator identity of N-formylmethionyl-tRNA by promoting its recognition by IF2 and preventing the misappropriation of this tRNA by the elongation apparatus. In Acinetobacter baylyi (strain ATCC 33305 / BD413 / ADP1), this protein is Methionyl-tRNA formyltransferase.